Here is a 405-residue protein sequence, read N- to C-terminus: Bifunctional enzyme IspD/IspF (405 aa).

Residues 1–246 (MLQMPSKQPI…KLSASLLPDV (246 aa)) are 2-C-methyl-D-erythritol 4-phosphate cytidylyltransferase. Residues 247–405 (RTGNGYDVHQ…TATVVYRGRT (159 aa)) are 2-C-methyl-D-erythritol 2,4-cyclodiphosphate synthase. A divalent metal cation contacts are provided by Asp-253 and His-255. 4-CDP-2-C-methyl-D-erythritol 2-phosphate is bound by residues 253 to 255 (DVH) and 279 to 280 (HS). Residue His-287 participates in a divalent metal cation binding. Residues 301–303 (DIG), 377–380 (TTNE), Phe-384, and Arg-387 each bind 4-CDP-2-C-methyl-D-erythritol 2-phosphate.

The protein in the N-terminal section; belongs to the IspD/TarI cytidylyltransferase family. IspD subfamily. In the C-terminal section; belongs to the IspF family. Requires a divalent metal cation as cofactor.

It carries out the reaction 2-C-methyl-D-erythritol 4-phosphate + CTP + H(+) = 4-CDP-2-C-methyl-D-erythritol + diphosphate. It catalyses the reaction 4-CDP-2-C-methyl-D-erythritol 2-phosphate = 2-C-methyl-D-erythritol 2,4-cyclic diphosphate + CMP. It participates in isoprenoid biosynthesis; isopentenyl diphosphate biosynthesis via DXP pathway; isopentenyl diphosphate from 1-deoxy-D-xylulose 5-phosphate: step 2/6. The protein operates within isoprenoid biosynthesis; isopentenyl diphosphate biosynthesis via DXP pathway; isopentenyl diphosphate from 1-deoxy-D-xylulose 5-phosphate: step 4/6. Its function is as follows. Bifunctional enzyme that catalyzes the formation of 4-diphosphocytidyl-2-C-methyl-D-erythritol from CTP and 2-C-methyl-D-erythritol 4-phosphate (MEP) (IspD), and catalyzes the conversion of 4-diphosphocytidyl-2-C-methyl-D-erythritol 2-phosphate (CDP-ME2P) to 2-C-methyl-D-erythritol 2,4-cyclodiphosphate (ME-CPP) with a corresponding release of cytidine 5-monophosphate (CMP) (IspF). This chain is Bifunctional enzyme IspD/IspF, found in Rhizobium etli (strain CIAT 652).